Reading from the N-terminus, the 289-residue chain is Rhodopsin (289 aa).

The Extracellular portion of the chain corresponds to 1–7 (YLVNPAA). A helical transmembrane segment spans residues 8-32 (YAALGAYMFLLILIGFPINFLTLYV). The Cytoplasmic portion of the chain corresponds to 33 to 44 (TLEHKKLRTPLN). A helical transmembrane segment spans residues 45 to 67 (YILLNLAVANLFMVLGGFTTTMY). At 68–81 (TSMHGYFVLGRLGC) the chain is on the extracellular side. A disulfide bridge connects residues Cys81 and Cys158. The helical transmembrane segment at 82–104 (NLEAFFATLGGEIALWSLVVLAI) threads the bilayer. Positions 105 to 107 (ERW) match the 'Ionic lock' involved in activated form stabilization motif. Residues 105–123 (ERWIVVCKPISNFRFTEDH) lie on the Cytoplasmic side of the membrane. The chain crosses the membrane as a helical span at residues 124 to 144 (AIMGLAFTWVMALACAVPPLV). Over 145-173 (GWSRYIPEGMQCSCGVDYYTRAEGFNNES) the chain is Extracellular. A glycan (N-linked (GlcNAc...) asparagine) is linked at Asn171. A helical membrane pass occupies residues 174-195 (FVIYMFIVHFLIPLSVIFFCYG). The Cytoplasmic portion of the chain corresponds to 196 to 223 (RLLCAVKEAPAAQQESETTQRAEKEVSR). A helical membrane pass occupies residues 224–245 (MVVIMVIGFLVCWLPYASVAWW). The Extracellular portion of the chain corresponds to 246-257 (IFCNQGSDFGPI). A helical membrane pass occupies residues 258–279 (FMTLPSFFAKSAAIYNPMIYIC). Lys267 carries the N6-(retinylidene)lysine modification. At 280-289 (MNKQFRHCMI) the chain is on the cytoplasmic side.

This sequence belongs to the G-protein coupled receptor 1 family. Opsin subfamily. Post-translationally, phosphorylated on some or all of the serine and threonine residues present in the C-terminal region. Contains one covalently linked retinal chromophore.

The protein localises to the membrane. The protein resides in the cell projection. It is found in the cilium. It localises to the photoreceptor outer segment. Photoreceptor required for image-forming vision at low light intensity. While most salt water fish species use retinal as chromophore, most freshwater fish use 3-dehydroretinal, or a mixture of retinal and 3-dehydroretinal. Light-induced isomerization of 11-cis to all-trans retinal triggers a conformational change that activates signaling via G-proteins. Subsequent receptor phosphorylation mediates displacement of the bound G-protein alpha subunit by arrestin and terminates signaling. The protein is Rhodopsin (rho) of Abyssocottus korotneffi (Baikalian deep-water sculpin).